The following is a 282-amino-acid chain: sn-glycerol-3-phosphate transport system permease protein UgpE (282 aa).

6 helical membrane passes run 14 to 34 (LILILGIIIVAFPIYYTFVAS), 86 to 106 (MAIAVGKIIISFMSAFAIVFF), 112 to 132 (MFFFWMIFITLMLPVEVRILP), 146 to 168 (YAGLTLPLMASATATFLFRQFFL), 201 to 221 (IAALFVILSIYGWTQYLWPLL), and 248 to 268 (WNYVMVTAILAIIPPILVVVL). Positions 78–269 (LWNSFVVAMA…IPPILVVVLM (192 aa)) constitute an ABC transmembrane type-1 domain.

Belongs to the binding-protein-dependent transport system permease family. The complex is composed of two ATP-binding proteins (UgpC), two transmembrane proteins (UgpA and UgpE) and a solute-binding protein (UgpB).

The protein localises to the cell inner membrane. Functionally, part of the ABC transporter complex UgpBAEC involved in sn-glycerol-3-phosphate (G3P) import. Probably responsible for the translocation of the substrate across the membrane. This is sn-glycerol-3-phosphate transport system permease protein UgpE (ugpE) from Brucella suis biovar 1 (strain 1330).